A 206-amino-acid polypeptide reads, in one-letter code: Putative acetyltransferase OgpAT (206 aa).

The N-acetyltransferase domain occupies 5-205; the sequence is VVIRRATAAD…EVVVGRRLLD (201 aa). Acetyl-CoA is bound by residues 135–138, 144–148, 175–177, and His184; these read HIDL, GRGVG, and NPR.

It belongs to the acetyltransferase family. In terms of assembly, monomer.

Binds acetyl-CoA, but not butyryl-CoA or decanoyl-CoA. May have acetyltransferase activity. In Oceanicola granulosus (strain ATCC BAA-861 / DSM 15982 / KCTC 12143 / HTCC2516), this protein is Putative acetyltransferase OgpAT.